A 155-amino-acid polypeptide reads, in one-letter code: Troponin C, body wall muscle (155 aa).

Val1 bears the N-acetylvaline mark. EF-hand domains are found at residues 7-43, 44-79, 88-121, and 122-155; these read DEKSQFRAAFDIFVADAKDGTISSKELGKVMKMLGQN, PTEKDLQEMIEEVDIDGSGTIDFEEFCLMMYRQMQA, REEKELSEAFRLFDLDGDGIGDELKAALDGTGEN, and VETWEVDEMMADGDKNHDSQIDYEEWVTMMKFVQ. Asp57, Asp59, Ser61, Thr63, and Glu68 together coordinate Ca(2+). Asp135, Asn137, Asp139, Gln141, and Glu146 together coordinate Ca(2+).

It belongs to the troponin C family.

Its function is as follows. Troponin is the central regulatory protein of muscle contraction. Tn consists of three components: Tn-I which is the inhibitor of actomyosin ATPase, Tn-T which contains the binding site for tropomyosin and Tn-C. The binding of calcium to Tn-C abolishes the inhibitory action of Tn on actin filaments. The polypeptide is Troponin C, body wall muscle (Halocynthia roretzi (Sea squirt)).